The following is a 388-amino-acid chain: Succinate--CoA ligase [ADP-forming] subunit beta (388 aa).

The ATP-grasp domain maps to 9–244; the sequence is KQLFAEYGLP…PSQDDPREAH (236 aa). ATP-binding positions include K46, 53–55, E99, T102, and E107; that span reads GRG. The Mg(2+) site is built by N199 and D213. Residues N264 and 321 to 323 contribute to the substrate site; that span reads GIV.

This sequence belongs to the succinate/malate CoA ligase beta subunit family. Heterotetramer of two alpha and two beta subunits. The cofactor is Mg(2+).

It catalyses the reaction succinate + ATP + CoA = succinyl-CoA + ADP + phosphate. It carries out the reaction GTP + succinate + CoA = succinyl-CoA + GDP + phosphate. It participates in carbohydrate metabolism; tricarboxylic acid cycle; succinate from succinyl-CoA (ligase route): step 1/1. Succinyl-CoA synthetase functions in the citric acid cycle (TCA), coupling the hydrolysis of succinyl-CoA to the synthesis of either ATP or GTP and thus represents the only step of substrate-level phosphorylation in the TCA. The beta subunit provides nucleotide specificity of the enzyme and binds the substrate succinate, while the binding sites for coenzyme A and phosphate are found in the alpha subunit. This Pseudomonas fluorescens (strain ATCC BAA-477 / NRRL B-23932 / Pf-5) protein is Succinate--CoA ligase [ADP-forming] subunit beta.